Reading from the N-terminus, the 420-residue chain is Serine hydroxymethyltransferase (420 aa).

(6S)-5,6,7,8-tetrahydrofolate is bound by residues leucine 121 and 125–127 (GHL). Lysine 230 carries the post-translational modification N6-(pyridoxal phosphate)lysine. (6S)-5,6,7,8-tetrahydrofolate contacts are provided by residues glutamate 246 and 354–356 (SPF).

It belongs to the SHMT family. In terms of assembly, homodimer. The cofactor is pyridoxal 5'-phosphate.

The protein localises to the cytoplasm. It carries out the reaction (6R)-5,10-methylene-5,6,7,8-tetrahydrofolate + glycine + H2O = (6S)-5,6,7,8-tetrahydrofolate + L-serine. Its pathway is one-carbon metabolism; tetrahydrofolate interconversion. It functions in the pathway amino-acid biosynthesis; glycine biosynthesis; glycine from L-serine: step 1/1. Its function is as follows. Catalyzes the reversible interconversion of serine and glycine with tetrahydrofolate (THF) serving as the one-carbon carrier. This reaction serves as the major source of one-carbon groups required for the biosynthesis of purines, thymidylate, methionine, and other important biomolecules. Also exhibits THF-independent aldolase activity toward beta-hydroxyamino acids, producing glycine and aldehydes, via a retro-aldol mechanism. The protein is Serine hydroxymethyltransferase of Rickettsia rickettsii (strain Iowa).